The primary structure comprises 231 residues: L-ribulose-5-phosphate 4-epimerase SgbE (231 aa).

Substrate-binding positions include 27 to 28 (GN), 44 to 45 (SG), and 74 to 75 (SS). Aspartate 76, histidine 95, and histidine 97 together coordinate Zn(2+). Residue aspartate 120 is the Proton donor/acceptor of the active site. Histidine 171 is a Zn(2+) binding site. The active-site Proton donor/acceptor is tyrosine 229.

Belongs to the aldolase class II family. AraD/FucA subfamily. The cofactor is Zn(2+).

It carries out the reaction L-ribulose 5-phosphate = D-xylulose 5-phosphate. In terms of biological role, catalyzes the interconversion of L-ribulose 5-phosphate (LRu5P) and D-xylulose 5-phosphate (D-Xu5P) via a retroaldol/aldol mechanism (carbon-carbon bond cleavage analogous to a class II aldolase reaction). May be involved in the utilization of 2,3-diketo-L-gulonate. In Haemophilus influenzae (strain ATCC 51907 / DSM 11121 / KW20 / Rd), this protein is L-ribulose-5-phosphate 4-epimerase SgbE.